A 384-amino-acid polypeptide reads, in one-letter code: Chorismate synthase (384 aa).

NADP(+) contacts are provided by Arg-40 and Arg-46. Residues 127-129 (RTS), 247-248 (QA), Ala-292, 307-311 (KPIPT), and Arg-333 contribute to the FMN site.

The protein belongs to the chorismate synthase family. As to quaternary structure, homotetramer. Requires FMNH2 as cofactor.

The catalysed reaction is 5-O-(1-carboxyvinyl)-3-phosphoshikimate = chorismate + phosphate. It participates in metabolic intermediate biosynthesis; chorismate biosynthesis; chorismate from D-erythrose 4-phosphate and phosphoenolpyruvate: step 7/7. Its function is as follows. Catalyzes the anti-1,4-elimination of the C-3 phosphate and the C-6 proR hydrogen from 5-enolpyruvylshikimate-3-phosphate (EPSP) to yield chorismate, which is the branch point compound that serves as the starting substrate for the three terminal pathways of aromatic amino acid biosynthesis. This reaction introduces a second double bond into the aromatic ring system. The chain is Chorismate synthase from Alkaliphilus oremlandii (strain OhILAs) (Clostridium oremlandii (strain OhILAs)).